Here is a 337-residue protein sequence, read N- to C-terminus: Peptide methionine sulfoxide reductase MsrA/MsrB (337 aa).

The peptide methionine sulfoxide reductase A stretch occupies residues 28–181 (KDIYLAGGCF…PGGYCHVDLS (154 aa)). Residue Cys-36 is part of the active site. Residues 198–321 (KDELKAKLSD…NGASLKFIPL (124 aa)) enclose the MsrB domain. The active-site Nucleophile is the Cys-310.

It in the N-terminal section; belongs to the MsrA Met sulfoxide reductase family. In the C-terminal section; belongs to the MsrB Met sulfoxide reductase family.

It carries out the reaction L-methionyl-[protein] + [thioredoxin]-disulfide + H2O = L-methionyl-(S)-S-oxide-[protein] + [thioredoxin]-dithiol. It catalyses the reaction [thioredoxin]-disulfide + L-methionine + H2O = L-methionine (S)-S-oxide + [thioredoxin]-dithiol. The enzyme catalyses L-methionyl-[protein] + [thioredoxin]-disulfide + H2O = L-methionyl-(R)-S-oxide-[protein] + [thioredoxin]-dithiol. Its function is as follows. Has an important function as a repair enzyme for proteins that have been inactivated by oxidation. Catalyzes the reversible oxidation-reduction of methionine sulfoxide in proteins to methionine. This chain is Peptide methionine sulfoxide reductase MsrA/MsrB (msrAB), found in Campylobacter fetus.